The following is an 88-amino-acid chain: Large ribosomal subunit protein bL27 (88 aa).

The disordered stretch occupies residues 1–21 (MAHKKGQGSTQNNRDSAGRRL).

It belongs to the bacterial ribosomal protein bL27 family.

The protein is Large ribosomal subunit protein bL27 of Helicobacter pylori (strain J99 / ATCC 700824) (Campylobacter pylori J99).